The primary structure comprises 2671 residues: Inositol 1,4,5-trisphosphate-gated calcium channel ITPR3 (2671 aa).

Residues 1 to 2202 are Cytoplasmic-facing; it reads MSEMSSFLHI…LIYWFSRRMT (2202 aa). 5 consecutive MIR domains span residues 113-173, 174-224, 232-288, 295-372, and 378-434; these read GDVV…LRSN, GDNV…INLF, EEVL…VEVV, GGAG…LDPT, and DSFV…IVSV. Residues arginine 266, threonine 268, leucine 269, and arginine 270 each coordinate 1D-myo-inositol 1,4,5-trisphosphate. Residues 322–342 form a disordered region; that stretch reads SYKGDASDPKAAGMGAQGRTG. The 1D-myo-inositol 1,4,5-trisphosphate site is built by arginine 503, lysine 507, arginine 510, tyrosine 567, arginine 568, and lysine 569. Arginine 743 is a Ca(2+) binding site. Serine 916 and serine 934 each carry phosphoserine. Ca(2+) contacts are provided by glutamate 1122 and glutamate 1125. Disordered stretches follow at residues 1132–1163 and 1809–1848; these read GSGKGEEVEAGAAKDKKERPTDEEGFLHPPGE and NDLGSQPHEDREPVDPTTKGRVASFSIPGSSSRYSLGPSL. 3 positions are modified to phosphoserine: serine 1813, serine 1832, and serine 1834. Residues glutamate 1882 and glutamate 1946 each coordinate Ca(2+). Positions 1996, 2149, and 2152 each coordinate ATP. Residues 2203–2223 form a helical membrane-spanning segment; the sequence is LWGSISFNLAVFINIIIAFFY. At 2224–2235 the chain is on the extracellular side; that stretch reads PYMEGASTGVLD. The chain crosses the membrane as a helical span at residues 2236–2256; that stretch reads SPLISLLFWILICFSIAALFT. Residues 2257–2264 lie on the Cytoplasmic side of the membrane; it reads KRYSIRPL. A helical transmembrane segment spans residues 2265–2285; that stretch reads IVALILRSIYYLGIGPTLNIL. Residues 2286–2325 lie on the Extracellular side of the membrane; that stretch reads GALNLTNKIVFVVSFVGNRGTFIRGYKAMVMDMEFLYHVG. Residues 2326–2346 traverse the membrane as a helical segment; that stretch reads YILTSVLGLFAHELFYSILLF. Over 2347-2368 the chain is Cytoplasmic; it reads DLIYREETLFNVIKSVTRNGRS. The chain crosses the membrane as a helical span at residues 2369–2389; sequence ILLTALLALILVYLFSIVGFL. The Extracellular segment spans residues 2390 to 2496; the sequence is FLKDDFILEV…ESLFPARVVY (107 aa). Cysteine 2455 and cysteine 2461 form a disulfide bridge. Residues 2497 to 2517 traverse the membrane as a helical segment; sequence DLLFFFIVIIIVLNLIFGVII. The Cytoplasmic segment spans residues 2518 to 2671; it reads DTFADLRSEK…FVDVQNCISR (154 aa). Residues cysteine 2538 and phenylalanine 2539 each contribute to the ATP site. A Zn(2+)-binding site is contributed by cysteine 2538. Zn(2+) is bound by residues cysteine 2541 and histidine 2558. Lysine 2560, histidine 2563, asparagine 2564, and methionine 2565 together coordinate ATP. Histidine 2563 serves as a coordination point for Zn(2+). Ca(2+) is bound at residue threonine 2581. 2 positions are modified to phosphoserine: serine 2609 and serine 2670.

Belongs to the InsP3 receptor family. Homotetramer. Homodimer. Interacts with TRPC1, TRPC3 and TRPC4. Interacts with TRPV4. Interacts with SIGMAR1. Interacts with PML and AKT1. Interacts with IRAG2 (via coiled-coil domain). Interacts with CABP1. Interacts with TMBIM4/LFG4. Interacts with CEMIP. Interacts with TESPA1. Interacts with TMEM203. Interacts with BOK; regulates ITPR3 expression. Interacts with BCL2L10. Interacts with CHGA and CHGB. Phosphorylated by AKT1 on serine and/or threonine residues. In terms of tissue distribution, expressed in intestinal crypt and villus epithelial cells.

It localises to the endoplasmic reticulum membrane. It is found in the cytoplasmic vesicle. Its subcellular location is the secretory vesicle membrane. It carries out the reaction Ca(2+)(in) = Ca(2+)(out). Its activity is regulated as follows. Inositol 1,4,5-trisphosphate-gated calcium channel is regulated by cytosolic calcium in a biphasic manner. At low concentrations, cytosolic calcium binds at a high-affinity juxtamembrane domain (JD) calcium binding site, allowing ITPR3 to activate by escaping a low-energy resting state through an ensemble of preactivated states. At high cytosolic calcium concentrations, ITPR3 preferentially enters an inhibited state stabilized by calcium binding at a second, low-affinity cytoplasmic domain (CD) calcium binding site. In terms of biological role, inositol 1,4,5-trisphosphate-gated calcium channel that, upon 1D-myo-inositol 1,4,5-trisphosphate binding, transports calcium from the endoplasmic reticulum lumen to cytoplasm, thus releasing the intracellular calcium and therefore participates in cellular calcium ion homeostasis. 1D-myo-inositol 1,4,5-trisphosphate binds to the ligand-free channel without altering its global conformation, yielding the low-energy resting state, then progresses through resting-to preactivated transitions to the higher energy preactivated state, which increases affinity for calcium, promoting binding of the low basal cytosolic calcium at the juxtamembrane domain (JD) site, favoring the transition through the ensemble of high-energy intermediate states along the trajectory to the fully-open activated state. Upon opening, releases calcium in the cytosol where it can bind to the low-affinity cytoplasmic domain (CD) site and stabilizes the inhibited state to terminate calcium release. This is Inositol 1,4,5-trisphosphate-gated calcium channel ITPR3 from Homo sapiens (Human).